The sequence spans 291 residues: UPF0276 protein VV1_0952 (291 aa).

This sequence belongs to the UPF0276 family.

This Vibrio vulnificus (strain CMCP6) protein is UPF0276 protein VV1_0952.